The following is a 428-amino-acid chain: Dihydroorotase (428 aa).

Zn(2+) contacts are provided by H56 and H58. Residues 58-60 (HLR) and N90 each bind substrate. Zn(2+)-binding residues include D150, H177, and H230. N276 serves as a coordination point for substrate. D303 is a Zn(2+) binding site. Residue D303 is part of the active site. H307 is a substrate binding site.

Belongs to the metallo-dependent hydrolases superfamily. DHOase family. Class I DHOase subfamily. Zn(2+) is required as a cofactor.

It catalyses the reaction (S)-dihydroorotate + H2O = N-carbamoyl-L-aspartate + H(+). It functions in the pathway pyrimidine metabolism; UMP biosynthesis via de novo pathway; (S)-dihydroorotate from bicarbonate: step 3/3. In terms of biological role, catalyzes the reversible cyclization of carbamoyl aspartate to dihydroorotate. The chain is Dihydroorotase from Streptomyces coelicolor (strain ATCC BAA-471 / A3(2) / M145).